The following is a 338-amino-acid chain: Ketol-acid reductoisomerase (NADP(+)) (338 aa).

A KARI N-terminal Rossmann domain is found at 1–181; that stretch reads MRVFYDKDCD…GGGRTGIIET (181 aa). NADP(+)-binding positions include 24–27, arginine 47, serine 50, threonine 52, and 82–85; these read YGSQ and DEFQ. Histidine 107 is a catalytic residue. Glycine 133 contributes to the NADP(+) binding site. In terms of domain architecture, KARI C-terminal knotted spans 182-327; it reads TFKDETETDL…EKLRAMMPWI (146 aa). Mg(2+) is bound by residues aspartate 190, glutamate 194, glutamate 226, and glutamate 230. A substrate-binding site is contributed by serine 251.

It belongs to the ketol-acid reductoisomerase family. It depends on Mg(2+) as a cofactor.

The enzyme catalyses (2R)-2,3-dihydroxy-3-methylbutanoate + NADP(+) = (2S)-2-acetolactate + NADPH + H(+). The catalysed reaction is (2R,3R)-2,3-dihydroxy-3-methylpentanoate + NADP(+) = (S)-2-ethyl-2-hydroxy-3-oxobutanoate + NADPH + H(+). It participates in amino-acid biosynthesis; L-isoleucine biosynthesis; L-isoleucine from 2-oxobutanoate: step 2/4. Its pathway is amino-acid biosynthesis; L-valine biosynthesis; L-valine from pyruvate: step 2/4. Functionally, involved in the biosynthesis of branched-chain amino acids (BCAA). Catalyzes an alkyl-migration followed by a ketol-acid reduction of (S)-2-acetolactate (S2AL) to yield (R)-2,3-dihydroxy-isovalerate. In the isomerase reaction, S2AL is rearranged via a Mg-dependent methyl migration to produce 3-hydroxy-3-methyl-2-ketobutyrate (HMKB). In the reductase reaction, this 2-ketoacid undergoes a metal-dependent reduction by NADPH to yield (R)-2,3-dihydroxy-isovalerate. The sequence is that of Ketol-acid reductoisomerase (NADP(+)) from Pseudomonas aeruginosa (strain LESB58).